A 96-amino-acid chain; its full sequence is Pyrimidine/purine nucleoside phosphorylase (96 aa).

It belongs to the nucleoside phosphorylase PpnP family.

The catalysed reaction is a purine D-ribonucleoside + phosphate = a purine nucleobase + alpha-D-ribose 1-phosphate. The enzyme catalyses adenosine + phosphate = alpha-D-ribose 1-phosphate + adenine. It catalyses the reaction cytidine + phosphate = cytosine + alpha-D-ribose 1-phosphate. It carries out the reaction guanosine + phosphate = alpha-D-ribose 1-phosphate + guanine. The catalysed reaction is inosine + phosphate = alpha-D-ribose 1-phosphate + hypoxanthine. The enzyme catalyses thymidine + phosphate = 2-deoxy-alpha-D-ribose 1-phosphate + thymine. It catalyses the reaction uridine + phosphate = alpha-D-ribose 1-phosphate + uracil. It carries out the reaction xanthosine + phosphate = alpha-D-ribose 1-phosphate + xanthine. In terms of biological role, catalyzes the phosphorolysis of diverse nucleosides, yielding D-ribose 1-phosphate and the respective free bases. Can use uridine, adenosine, guanosine, cytidine, thymidine, inosine and xanthosine as substrates. Also catalyzes the reverse reactions. This Serratia proteamaculans (strain 568) protein is Pyrimidine/purine nucleoside phosphorylase.